Consider the following 150-residue polypeptide: L-alanine exporter AlaE (150 aa).

Helical transmembrane passes span 17–37 (FAMVVFCFITGMFIEILISGM), 48–68 (LSIPVNIAIAWPYGVFRDFML), 86–106 (LVAYVTFQSPAYAMILLVVGA), and 111–131 (IITAVSSNVVVSCVMGVFYGY).

It belongs to the AlaE exporter family.

The protein resides in the cell inner membrane. Its function is as follows. Exports L-alanine. In Aliivibrio fischeri (strain ATCC 700601 / ES114) (Vibrio fischeri), this protein is L-alanine exporter AlaE.